Consider the following 149-residue polypeptide: Large ribosomal subunit protein uL15 (149 aa).

Positions 1-11 (MSDPIKLHDLR) are enriched in basic and acidic residues. Residues 1 to 44 (MSDPIKLHDLRPAPGAKKAKTRVGRGEASKGKTAGRGTKGTKAR) form a disordered region.

This sequence belongs to the universal ribosomal protein uL15 family. In terms of assembly, part of the 50S ribosomal subunit.

Functionally, binds to the 23S rRNA. This is Large ribosomal subunit protein uL15 from Corynebacterium jeikeium (strain K411).